The chain runs to 1297 residues: Phosphoribosylformylglycinamidine synthase (1297 aa).

ATP-binding positions include 307–318 (GASTGSGGEIRD) and Ala678. 3 residues coordinate Mg(2+): Glu718, Asn722, and Asp886. One can recognise a Glutamine amidotransferase type-1 domain in the interval 1044–1297 (MAILREQGVN…MFQNARKNLA (254 aa)). The active-site Nucleophile is Cys1137. Active-site residues include His1262 and Glu1264.

It in the N-terminal section; belongs to the FGAMS family. As to quaternary structure, monomer.

The protein resides in the cytoplasm. The catalysed reaction is N(2)-formyl-N(1)-(5-phospho-beta-D-ribosyl)glycinamide + L-glutamine + ATP + H2O = 2-formamido-N(1)-(5-O-phospho-beta-D-ribosyl)acetamidine + L-glutamate + ADP + phosphate + H(+). The protein operates within purine metabolism; IMP biosynthesis via de novo pathway; 5-amino-1-(5-phospho-D-ribosyl)imidazole from N(2)-formyl-N(1)-(5-phospho-D-ribosyl)glycinamide: step 1/2. Functionally, phosphoribosylformylglycinamidine synthase involved in the purines biosynthetic pathway. Catalyzes the ATP-dependent conversion of formylglycinamide ribonucleotide (FGAR) and glutamine to yield formylglycinamidine ribonucleotide (FGAM) and glutamate. The sequence is that of Phosphoribosylformylglycinamidine synthase from Vibrio vulnificus (strain YJ016).